Reading from the N-terminus, the 333-residue chain is tRNA-dihydrouridine(16) synthase (333 aa).

FMN-binding positions include 19–21 (PMQ) and Q80. The Proton donor role is filled by C110. FMN-binding positions include K151, 211-213 (NGD), and 235-236 (GR).

The protein belongs to the Dus family. DusC subfamily. The cofactor is FMN.

It carries out the reaction 5,6-dihydrouridine(16) in tRNA + NADP(+) = uridine(16) in tRNA + NADPH + H(+). It catalyses the reaction 5,6-dihydrouridine(16) in tRNA + NAD(+) = uridine(16) in tRNA + NADH + H(+). Its function is as follows. Catalyzes the synthesis of 5,6-dihydrouridine (D), a modified base found in the D-loop of most tRNAs, via the reduction of the C5-C6 double bond in target uridines. Specifically modifies U16 in tRNAs. The sequence is that of tRNA-dihydrouridine(16) synthase from Neisseria meningitidis serogroup A / serotype 4A (strain DSM 15465 / Z2491).